A 1338-amino-acid chain; its full sequence is ABC-type transporter kk1G (1338 aa).

Residues 1 to 21 (MSAIELPPLRSRSEEAARAEH) are disordered. A compositionally biased stretch (basic and acidic residues) spans 11 to 21 (SRSEEAARAEH). 6 helical membrane passes run 75–95 (YFLISLCCFTSIGAGTAMPLM), 130–150 (LYIFYLFIGKFAMSYISMLAI), 203–223 (HFATLFQSLAFTVGLYVVALV), 230–250 (LIASTGLPFILIVYGAMFPPF), 312–332 (TMSPAMVAMYGIFGITFWFGI), and 340–360 (ISSVGDITVVLFSVMMAVMNI). The ABC transmembrane type-1 1 domain occupies 80 to 372 (LCCFTSIGAG…VASPIISIAK (293 aa)). Residues 405–706 (ITFINVAFSY…GDGVYYGLVH (302 aa)) enclose the ABC transporter 1 domain. 440-447 (GPSGSGKS) contacts ATP. Disordered stretches follow at residues 473-518 (EIPS…TCTG) and 715-747 (EDDDDHSSSLENIKMNDTKEDTASSGFEGHASR). Helical transmembrane passes span 777 to 797 (VCCIGILGAGAVYPLQAYIFA), 816 to 836 (FWAGMFGVLAGGVGLSYYLLG), 895 to 917 (MSMALIACTNLLGCTIIAFVYGW), 919 to 941 (LSLVGLFAALPLILGAGLVRTRL), 1003 to 1023 (IIFAASDSLELACMSLTFWYG), and 1037 to 1057 (FFIVYTAIIQGATAAGIWFSF). The ABC transmembrane type-1 2 domain occupies 777–1063 (VCCIGILGAG…WFSFTPSMAQ (287 aa)). An ABC transporter 2 domain is found at 1096–1333 (IEFQHVSFKY…KGVYWQMCQA (238 aa)). An ATP-binding site is contributed by 1130–1137 (GSSGCGKS).

Belongs to the ABC transporter superfamily. ABCB family. Multidrug resistance exporter (TC 3.A.1.201) subfamily.

The protein resides in the cell membrane. The protein operates within secondary metabolite biosynthesis. Functionally, ABC transporter; part of the gene cluster that mediates the biosynthesis of KK-1, a novel cyclic depsipeptide with 10 residues which is a promising active compound with high activity against many plant pathogens, especially Botrytis cinerea. Is probably directly involved in the secretion of KK-1 and thus confers self-tolerance against KK-1. This chain is ABC-type transporter kk1G, found in Curvularia clavata.